The sequence spans 129 residues: MSIPNDLKYTKSHEWVRLEDDGTATIGITQHAQELLGDMVFVETPAVGRQLKQGDECAVVESVKAAADVYAPITGEVTAANPELASAPEKINQDAYAAWLFRLKPANTADLEKLLDSAGYQKLLESEDH.

Positions threonine 23 to lysine 104 constitute a Lipoyl-binding domain. Lysine 64 carries the N6-lipoyllysine modification.

Belongs to the GcvH family. As to quaternary structure, the glycine cleavage system is composed of four proteins: P, T, L and H. Requires (R)-lipoate as cofactor.

Its function is as follows. The glycine cleavage system catalyzes the degradation of glycine. The H protein shuttles the methylamine group of glycine from the P protein to the T protein. In Nitrosospira multiformis (strain ATCC 25196 / NCIMB 11849 / C 71), this protein is Glycine cleavage system H protein.